Reading from the N-terminus, the 173-residue chain is Lipoprotein signal peptidase (173 aa).

4 helical membrane-spanning segments follow: residues 24–44, 55–75, 80–100, and 105–125; these read PWLG…IAIL, ITGF…SFLA, WQRW…VWLL, and GQKL…GNVI. Catalysis depends on residues Asp135 and Asp153. Residues 145-165 form a helical membrane-spanning segment; sequence HWPAFNVADCGICIGAVLLII.

The protein belongs to the peptidase A8 family.

The protein resides in the cell inner membrane. It catalyses the reaction Release of signal peptides from bacterial membrane prolipoproteins. Hydrolyzes -Xaa-Yaa-Zaa-|-(S,diacylglyceryl)Cys-, in which Xaa is hydrophobic (preferably Leu), and Yaa (Ala or Ser) and Zaa (Gly or Ala) have small, neutral side chains.. The protein operates within protein modification; lipoprotein biosynthesis (signal peptide cleavage). Its function is as follows. This protein specifically catalyzes the removal of signal peptides from prolipoproteins. This is Lipoprotein signal peptidase from Ralstonia nicotianae (strain ATCC BAA-1114 / GMI1000) (Ralstonia solanacearum).